The following is a 1134-amino-acid chain: TBC1 domain family member 8 (1134 aa).

2 GRAM domains span residues V145 to S212 and E285 to E353. The disordered stretch occupies residues A433–S466. Basic and acidic residues predominate over residues S437 to P447. Over residues V455 to S466 the composition is skewed to polar residues. The region spanning G504–G691 is the Rab-GAP TBC domain. A disordered region spans residues S1034 to E1070.

Functionally, may act as a GTPase-activating protein for Rab family protein(s). This is TBC1 domain family member 8 (Tbc1d8) from Mus musculus (Mouse).